A 295-amino-acid polypeptide reads, in one-letter code: Ribosomal RNA small subunit methyltransferase A (295 aa).

Residues Asn28, Leu30, Gly55, Glu76, Asp101, and Asn131 each contribute to the S-adenosyl-L-methionine site.

It belongs to the class I-like SAM-binding methyltransferase superfamily. rRNA adenine N(6)-methyltransferase family. RsmA subfamily.

It is found in the cytoplasm. The catalysed reaction is adenosine(1518)/adenosine(1519) in 16S rRNA + 4 S-adenosyl-L-methionine = N(6)-dimethyladenosine(1518)/N(6)-dimethyladenosine(1519) in 16S rRNA + 4 S-adenosyl-L-homocysteine + 4 H(+). Specifically dimethylates two adjacent adenosines (A1518 and A1519) in the loop of a conserved hairpin near the 3'-end of 16S rRNA in the 30S particle. May play a critical role in biogenesis of 30S subunits. In Pelotomaculum thermopropionicum (strain DSM 13744 / JCM 10971 / SI), this protein is Ribosomal RNA small subunit methyltransferase A.